Reading from the N-terminus, the 1040-residue chain is Multidrug resistance protein MdtB (1040 aa).

11 helical membrane-spanning segments follow: residues 15–37, 345–362, 367–389, 396–418, 438–460, 472–494, 535–557, 867–889, 909–931, 968–990, and 1000–1022; these read LFIM…GIIG, FELM…YLFL, ATII…MVFL, LTLM…VIEN, GEIG…PLLF, FAIT…TPMM, HPWL…WVFI, VWLI…ESFI, LMIA…IGIV, ILMT…GVGA, and MVGG…YLLF.

Belongs to the resistance-nodulation-cell division (RND) (TC 2.A.6) family. MdtB subfamily. Part of a tripartite efflux system composed of MdtA, MdtB and MdtC. MdtB forms a heteromultimer with MdtC.

It localises to the cell inner membrane. Its function is as follows. The MdtABC tripartite complex confers resistance against novobiocin and deoxycholate. The protein is Multidrug resistance protein MdtB of Escherichia coli O157:H7.